The primary structure comprises 104 residues: Complex III assembly factor LYRM7 (104 aa).

The residue at position 60 (serine 60) is a Phosphoserine.

Belongs to the complex I LYR family. In terms of assembly, interacts with UQCRFS1.

The protein resides in the mitochondrion matrix. In terms of biological role, assembly factor required for Rieske Fe-S protein UQCRFS1 incorporation into the cytochrome b-c1 (CIII) complex. Functions as a chaperone, binding to this subunit within the mitochondrial matrix and stabilizing it prior to its translocation and insertion into the late CIII dimeric intermediate within the mitochondrial inner membrane. In Mus musculus (Mouse), this protein is Complex III assembly factor LYRM7 (Lyrm7).